The primary structure comprises 393 residues: NAD(P)H-quinone oxidoreductase subunit H, chloroplastic (393 aa).

Belongs to the complex I 49 kDa subunit family. As to quaternary structure, NDH is composed of at least 16 different subunits, 5 of which are encoded in the nucleus.

The protein localises to the plastid. Its subcellular location is the chloroplast thylakoid membrane. It carries out the reaction a plastoquinone + NADH + (n+1) H(+)(in) = a plastoquinol + NAD(+) + n H(+)(out). It catalyses the reaction a plastoquinone + NADPH + (n+1) H(+)(in) = a plastoquinol + NADP(+) + n H(+)(out). Its function is as follows. NDH shuttles electrons from NAD(P)H:plastoquinone, via FMN and iron-sulfur (Fe-S) centers, to quinones in the photosynthetic chain and possibly in a chloroplast respiratory chain. The immediate electron acceptor for the enzyme in this species is believed to be plastoquinone. Couples the redox reaction to proton translocation, and thus conserves the redox energy in a proton gradient. The polypeptide is NAD(P)H-quinone oxidoreductase subunit H, chloroplastic (Draba nemorosa (Woodland whitlowgrass)).